The chain runs to 222 residues: Orotate phosphoribosyltransferase (222 aa).

Lys29 is a binding site for 5-phospho-alpha-D-ribose 1-diphosphate. 37–38 (FF) serves as a coordination point for orotate. Residues 75 to 76 (YK), Arg101, Lys102, Lys105, His107, and 126 to 134 (DDVISAGTS) contribute to the 5-phospho-alpha-D-ribose 1-diphosphate site. The orotate site is built by Ser130 and Arg158.

Belongs to the purine/pyrimidine phosphoribosyltransferase family. PyrE subfamily. As to quaternary structure, homodimer. Requires Mg(2+) as cofactor.

The catalysed reaction is orotidine 5'-phosphate + diphosphate = orotate + 5-phospho-alpha-D-ribose 1-diphosphate. It functions in the pathway pyrimidine metabolism; UMP biosynthesis via de novo pathway; UMP from orotate: step 1/2. Catalyzes the transfer of a ribosyl phosphate group from 5-phosphoribose 1-diphosphate to orotate, leading to the formation of orotidine monophosphate (OMP). The protein is Orotate phosphoribosyltransferase of Polynucleobacter necessarius subsp. necessarius (strain STIR1).